Reading from the N-terminus, the 62-residue chain is MQKEQEAQEIAKKAVKIVFFLGLVVVLLMMINLYMLINQINASAQMSHQIKKIEERLNQEQK.

A helical transmembrane segment spans residues 17 to 37 (IVFFLGLVVVLLMMINLYMLI).

Its subcellular location is the membrane. This is an uncharacterized protein from Helicobacter pylori (strain J99 / ATCC 700824) (Campylobacter pylori J99).